A 309-amino-acid polypeptide reads, in one-letter code: NAD-dependent protein deacylase sirtuin-5A, mitochondrial (309 aa).

The N-terminal 35 residues, Met1–Pro35, are a transit peptide targeting the mitochondrion. The Deacetylase sirtuin-type domain occupies Ser36–Glu306. Gly57–Trp76 is a binding site for NAD(+). Residues Tyr101 and Arg104 each coordinate substrate. Position 139–142 (Gln139–Asp142) interacts with NAD(+). His157 (proton acceptor) is an active-site residue. Zn(2+) contacts are provided by Cys165, Cys168, Cys206, and Cys211. NAD(+)-binding positions include Gly248–Ser250, Asn274–Glu276, and Cys292.

The protein belongs to the sirtuin family. Class III subfamily. Requires Zn(2+) as cofactor.

It is found in the mitochondrion. It localises to the cytoplasm. Its subcellular location is the cytosol. The protein resides in the nucleus. It carries out the reaction N(6)-malonyl-L-lysyl-[protein] + NAD(+) + H2O = 2''-O-malonyl-ADP-D-ribose + nicotinamide + L-lysyl-[protein]. It catalyses the reaction N(6)-succinyl-L-lysyl-[protein] + NAD(+) + H2O = 2''-O-succinyl-ADP-D-ribose + nicotinamide + L-lysyl-[protein]. The catalysed reaction is N(6)-glutaryl-L-lysyl-[protein] + NAD(+) + H2O = 2''-O-glutaryl-ADP-D-ribose + nicotinamide + L-lysyl-[protein]. Its function is as follows. NAD-dependent lysine demalonylase, desuccinylase and deglutarylase that specifically removes malonyl, succinyl and glutaryl groups on target proteins. Has weak NAD-dependent protein deacetylase activity; however this activity may not be physiologically relevant in vivo. The polypeptide is NAD-dependent protein deacylase sirtuin-5A, mitochondrial (sirt5-a) (Xenopus laevis (African clawed frog)).